The following is a 316-amino-acid chain: MYVLLANPRGFCAGVDRAIEIVKRAIETLGAPIYVRHEVVHNRFVVDDLKQRGAIFVEELDEVPDDATVIFSAHGVPQAVRQEAERRGLKVFDATCPLVTKVHFEVARHCRAGRDVVLIGHAGHPEVEGTMGQWSRERGPGTIYLVEDIEQVATLDVRQPENLAYTTQTTLSVDDTMGIIEALRARYPAMQGPRHDDICYATQNRQDAVRDLARQCDLVLVVGSPNSSNSNRLSELARRDGVESYLIDNASEIDPAWIVGKQHIGLTAGASAPQVLVDGVLARLRELGASGVSELEGEPESMVFALPKELRLRLVG.

Cys-12 is a [4Fe-4S] cluster binding site. (2E)-4-hydroxy-3-methylbut-2-enyl diphosphate-binding residues include His-41 and His-74. Residues His-41 and His-74 each coordinate dimethylallyl diphosphate. 2 residues coordinate isopentenyl diphosphate: His-41 and His-74. Cys-96 contacts [4Fe-4S] cluster. His-124 is a (2E)-4-hydroxy-3-methylbut-2-enyl diphosphate binding site. His-124 provides a ligand contact to dimethylallyl diphosphate. His-124 contacts isopentenyl diphosphate. The Proton donor role is filled by Glu-126. Thr-169 serves as a coordination point for (2E)-4-hydroxy-3-methylbut-2-enyl diphosphate. Position 199 (Cys-199) interacts with [4Fe-4S] cluster. Residues Ser-227, Ser-228, Asn-229, and Ser-271 each contribute to the (2E)-4-hydroxy-3-methylbut-2-enyl diphosphate site. Ser-227, Ser-228, Asn-229, and Ser-271 together coordinate dimethylallyl diphosphate. Isopentenyl diphosphate is bound by residues Ser-227, Ser-228, Asn-229, and Ser-271.

It belongs to the IspH family. [4Fe-4S] cluster serves as cofactor.

It carries out the reaction isopentenyl diphosphate + 2 oxidized [2Fe-2S]-[ferredoxin] + H2O = (2E)-4-hydroxy-3-methylbut-2-enyl diphosphate + 2 reduced [2Fe-2S]-[ferredoxin] + 2 H(+). It catalyses the reaction dimethylallyl diphosphate + 2 oxidized [2Fe-2S]-[ferredoxin] + H2O = (2E)-4-hydroxy-3-methylbut-2-enyl diphosphate + 2 reduced [2Fe-2S]-[ferredoxin] + 2 H(+). It participates in isoprenoid biosynthesis; dimethylallyl diphosphate biosynthesis; dimethylallyl diphosphate from (2E)-4-hydroxy-3-methylbutenyl diphosphate: step 1/1. Its pathway is isoprenoid biosynthesis; isopentenyl diphosphate biosynthesis via DXP pathway; isopentenyl diphosphate from 1-deoxy-D-xylulose 5-phosphate: step 6/6. Its function is as follows. Catalyzes the conversion of 1-hydroxy-2-methyl-2-(E)-butenyl 4-diphosphate (HMBPP) into a mixture of isopentenyl diphosphate (IPP) and dimethylallyl diphosphate (DMAPP). Acts in the terminal step of the DOXP/MEP pathway for isoprenoid precursor biosynthesis. In Xanthomonas oryzae pv. oryzae (strain MAFF 311018), this protein is 4-hydroxy-3-methylbut-2-enyl diphosphate reductase.